A 253-amino-acid polypeptide reads, in one-letter code: MAATTDTEHQEQAGTGGRGRRRPGRIAAQAVSVLGELLITAGLVMGLFVVYSLWWTNVVADRAADKQAEKVRDDWAQDRVGGSGQDGPGALDTKAGIGFLHVPAMSEGDILVEKGTSMKILNDGVAGYYTDPVKATLPTSDEKGNFSLAAHRDGHGARFHNIDKIEKGDPIVFETKDTWYVYKTYAVLPETSKYNVEVLGGIPKESGKKKAGHYITLTTCTPVYTSRYRYVVWGELVRTEKVDGDRTPPKELR.

Basic and acidic residues predominate over residues 1–11; sequence MAATTDTEHQE. Residues 1-23 form a disordered region; the sequence is MAATTDTEHQEQAGTGGRGRRRP. A helical transmembrane segment spans residues 30–50; sequence AVSVLGELLITAGLVMGLFVV. The segment at 69-89 is disordered; it reads EKVRDDWAQDRVGGSGQDGPG. Cysteine 220 is a catalytic residue.

This sequence belongs to the bacterial sortase family. Class E subfamily.

It is found in the cell membrane. The enzyme catalyses The enzyme catalyzes a cell wall sorting reaction in which a surface protein with a sorting signal containing a LPXTG motif is cleaved between the Thr and Gly residue. The resulting threonine carboxyl end of the protein is covalently attached to a pentaglycine cross-bridge of peptidoglycan.. Its function is as follows. Transpeptidase that anchors surface proteins to the cell wall. Recognizes Leu-Ala-x-Thr-Gly and Leu-Pro-x-Thr-Gly, with a preference for the former. Unlike the S.aureus sortase it cleaves not only the Thr-Gly motif but also the Ala-X bond; an Ala-Glu bond is a better substrate than the Thr-Gly motif in vitro. Among its possible substrates are the chaplins ChpA, ChpB and ChpC; this enzyme is more important for ChpC attachment than is SrtE1. A double knockout mutant of srtE1 and srtE2 shows a developmental defect in aerial hyphae formation more dramatic than that due to chaplin deletion. This chain is Sortase SrtE2, found in Streptomyces coelicolor (strain ATCC BAA-471 / A3(2) / M145).